We begin with the raw amino-acid sequence, 193 residues long: MSWLVVLLILYVIWDVNYFIRCVFTVFAGRLFQRKRKVTDTTTIYGLCTSQDVDIFIRHMNNARYLRELDFARFHFYALTGLYERIRDRRGGAVQGASSVRYRRTIPIFHPYKIQTKLIWWDDKAIYLEQQFITLSDGFVRAVAMSKQNITNCNVLEVLKTYPETAQRPEKPEELKLWLDAIELSSQKLRKDK.

The signal sequence occupies residues 1–18 (MSWLVVLLILYVIWDVNY). N-linked (GlcNAc...) asparagine glycosylation occurs at Asn149.

Belongs to the THEM6 family.

The protein resides in the secreted. The sequence is that of Protein THEM6 from Drosophila melanogaster (Fruit fly).